Here is a 1922-residue protein sequence, read N- to C-terminus: Endoribonuclease Dicer (1922 aa).

Residues 51–227 enclose the Helicase ATP-binding domain; it reads LLEAALDHNT…ELEEKIQKLE (177 aa). 64-71 serves as a coordination point for ATP; that stretch reads LNTGSGKT. Residues 175–178 carry the DECH box motif; sequence DECH. Residues 256 to 595 form a required for interaction with PRKRA and TARBP2 region; the sequence is DCGPFTDRSG…LRNKCSKSVD (340 aa). A disordered region spans residues 409 to 433; it reads YVSWSDSEDDDEDEEIEEKEKPETN. Phosphoserine is present on residues Ser413 and Ser415. The segment covering 414 to 425 has biased composition (acidic residues); that stretch reads DSEDDDEDEEIE. A Helicase C-terminal domain is found at 433–602; that stretch reads NFPSPFTNIL…SVDTGETDID (170 aa). Positions 630-722 constitute a Dicer dsRNA-binding fold domain; it reads AIGHINRYCA…MPVGKETVKY (93 aa). The 148-residue stretch at 895 to 1042 folds into the PAZ domain; that stretch reads KFMEDIEKSE…LVPELCAIHP (148 aa). Phosphoserine is present on residues Ser1016 and Ser1160. The RNase III 1 domain occupies 1276 to 1403; sequence DSEQSPSIGY…TDKWEKDEMT (128 aa). Mg(2+) contacts are provided by Glu1316, Asp1395, and Glu1398. A phosphoserine mark is found at Ser1460, Ser1468, and Ser1470. In terms of domain architecture, RNase III 2 spans 1666–1824; that stretch reads FENFEKKINY…LAGAIYMDSG (159 aa). Mg(2+)-binding residues include Glu1705, Asp1810, and Glu1813. The DRBM domain occupies 1849–1914; the sequence is VPRSPVRELL…ARRALRSLKA (66 aa). Phosphoserine is present on Ser1868.

It belongs to the helicase family. Dicer subfamily. In terms of assembly, component of the RISC loading complex (RLC), or micro-RNA (miRNA) loading complex (miRLC), which is composed of DICER1, AGO2 and TARBP2; DICER1 and TARBP2 are required to process precursor miRNAs (pre-miRNAs) to mature miRNAs and then load them onto AGO2. Note that the trimeric RLC/miRLC is also referred to as RISC. Interacts with DHX9, AGO1, PIWIL1 and PRKRA. Associates with the 60S ribosome. Interacts with BCDIN3D. Interacts with AGO2, TARBP2, EIF6, MOV10 and RPL7A (60S ribosome subunit); they form a large RNA-induced silencing complex (RISC). Interacts (via Dicer dsRNA-binding fold domain) with ALOX5 (via PLAT domain); this interaction enhances arachidonate 5-lipoxygenase activity and modifies the miRNA precursor processing activity of DICER1. (Microbial infection) Interacts with ebolavirus transcriptional activator VP30; this interaction prevents TARBP2/TRBP binding to DICER1 and thus allows the virus to counteract host RNA silencing. As to quaternary structure, (Microbial infection) Interacts with ebolavirus transcriptional activator VP35; this interaction prevents TARBP2/TRBP binding to DICER1 and thus allows the virus to counteract host RNA silencing. Requires Mg(2+) as cofactor. Mn(2+) serves as cofactor.

Its subcellular location is the cytoplasm. It is found in the perinuclear region. The enzyme catalyses Endonucleolytic cleavage to 5'-phosphomonoester.. Functionally, double-stranded RNA (dsRNA) endoribonuclease playing a central role in short dsRNA-mediated post-transcriptional gene silencing. Cleaves naturally occurring long dsRNAs and short hairpin pre-microRNAs (miRNA) into fragments of twenty-one to twenty-three nucleotides with 3' overhang of two nucleotides, producing respectively short interfering RNAs (siRNA) and mature microRNAs. SiRNAs and miRNAs serve as guide to direct the RNA-induced silencing complex (RISC) to complementary RNAs to degrade them or prevent their translation. Gene silencing mediated by siRNAs, also called RNA interference, controls the elimination of transcripts from mobile and repetitive DNA elements of the genome but also the degradation of exogenous RNA of viral origin for instance. The miRNA pathway on the other side is a mean to specifically regulate the expression of target genes. The chain is Endoribonuclease Dicer (DICER1) from Homo sapiens (Human).